Consider the following 167-residue polypeptide: MIRLSLFISLLLTSVAVLADVQINIRGNVYIPPCTINNGQNIVVDFGNINPEHVDNSRGEVTKTISISCPYKSGSLWIKVTGNTMGGGQNNVLATNITHFGIALYQGKGMSTPLILGNGSGNGYGVTAGLDTARSTFTFTSVPFRNGSGILNGGDFQTTASMSMIYN.

An N-terminal signal peptide occupies residues 1–18 (MIRLSLFISLLLTSVAVL).

It localises to the secreted. Its subcellular location is the fimbrium. Adapter that links the PapG adhesin to the distal end of the tip fibrillum. PapF is required for the correct presentation of the adhesin at the distal end of the tip fibrillum. Pili are polar filaments radiating from the surface of the bacterium to a length of 0.5-1.5 micrometers and numbering 100-300 per cell, and enable bacteria to colonize the epithelium of specific host organs. This is Fimbrial adapter PapF (papF) from Escherichia coli.